The sequence spans 249 residues: 2,3-bisphosphoglycerate-dependent phosphoglycerate mutase (249 aa).

Substrate contacts are provided by residues 9–16 (RHGESEWN), 22–23 (TG), Arg61, 88–91 (ERHY), Lys99, 115–116 (RR), and 184–185 (GN). His10 serves as the catalytic Tele-phosphohistidine intermediate. Catalysis depends on Glu88, which acts as the Proton donor/acceptor.

This sequence belongs to the phosphoglycerate mutase family. BPG-dependent PGAM subfamily.

The enzyme catalyses (2R)-2-phosphoglycerate = (2R)-3-phosphoglycerate. It functions in the pathway carbohydrate degradation; glycolysis; pyruvate from D-glyceraldehyde 3-phosphate: step 3/5. Catalyzes the interconversion of 2-phosphoglycerate and 3-phosphoglycerate. This is 2,3-bisphosphoglycerate-dependent phosphoglycerate mutase from Cutibacterium acnes (strain DSM 16379 / KPA171202) (Propionibacterium acnes).